Consider the following 387-residue polypeptide: Sorting nexin-7 (387 aa).

One can recognise a PX domain in the interval 30-151 (KDLFITVDEP…IFLTAQAWEL (122 aa)). A 1,2-diacyl-sn-glycero-3-phospho-(1D-myo-inositol-3-phosphate) contacts are provided by R73, Q75, K103, and R117. One can recognise a BAR domain in the interval 178–387 (GVKNRPEEFM…HLEEASEDKP (210 aa)).

This sequence belongs to the sorting nexin family. In terms of assembly, heterodimer; heterodimerizes with SNX4.

It is found in the early endosome membrane. In terms of biological role, involved in the regulation of endocytosis and in several stages of intracellular trafficking. Together with SNX4, involved in autophagosome assembly by regulating trafficking and recycling of phospholipid scramblase ATG9A. This is Sorting nexin-7 from Homo sapiens (Human).